A 433-amino-acid polypeptide reads, in one-letter code: Homoserine dehydrogenase (433 aa).

3 residues coordinate NADPH: T12, V13, and K102. V13 is an NAD(+) binding site. NADP(+)-binding residues include V13 and K102. Na(+)-binding residues include E126, V129, G131, and I133. NADP(+) contacts are provided by G184 and E187. The L-homoserine site is built by E187 and D198. K202 acts as the Proton donor in catalysis. Position 303 (G303) interacts with NADPH. G303 lines the NAD(+) pocket. G303 provides a ligand contact to NADP(+). The 78-residue stretch at 356 to 433 (YCRFLCADVP…EIPSVIRVLS (78 aa)) folds into the ACT domain.

Belongs to the homoserine dehydrogenase family. A metal cation is required as a cofactor.

It catalyses the reaction L-homoserine + NADP(+) = L-aspartate 4-semialdehyde + NADPH + H(+). The catalysed reaction is L-homoserine + NAD(+) = L-aspartate 4-semialdehyde + NADH + H(+). Its pathway is amino-acid biosynthesis; L-methionine biosynthesis via de novo pathway; L-homoserine from L-aspartate: step 3/3. The protein operates within amino-acid biosynthesis; L-threonine biosynthesis; L-threonine from L-aspartate: step 3/5. In terms of biological role, catalyzes the conversion of L-aspartate-beta-semialdehyde (L-Asa) to L-homoserine (L-Hse), the third step in the biosynthesis of threonine and methionine from aspartate. This chain is Homoserine dehydrogenase (hom), found in Synechocystis sp. (strain ATCC 27184 / PCC 6803 / Kazusa).